The primary structure comprises 252 residues: Imidazole glycerol phosphate synthase subunit HisF (252 aa).

Active-site residues include Asp-11 and Asp-130.

Belongs to the HisA/HisF family. As to quaternary structure, heterodimer of HisH and HisF.

It is found in the cytoplasm. The enzyme catalyses 5-[(5-phospho-1-deoxy-D-ribulos-1-ylimino)methylamino]-1-(5-phospho-beta-D-ribosyl)imidazole-4-carboxamide + L-glutamine = D-erythro-1-(imidazol-4-yl)glycerol 3-phosphate + 5-amino-1-(5-phospho-beta-D-ribosyl)imidazole-4-carboxamide + L-glutamate + H(+). It functions in the pathway amino-acid biosynthesis; L-histidine biosynthesis; L-histidine from 5-phospho-alpha-D-ribose 1-diphosphate: step 5/9. Functionally, IGPS catalyzes the conversion of PRFAR and glutamine to IGP, AICAR and glutamate. The HisF subunit catalyzes the cyclization activity that produces IGP and AICAR from PRFAR using the ammonia provided by the HisH subunit. This Moorella thermoacetica (strain ATCC 39073 / JCM 9320) protein is Imidazole glycerol phosphate synthase subunit HisF.